A 79-amino-acid polypeptide reads, in one-letter code: UPF0154 protein SAG1601 (79 aa).

The helical transmembrane segment at 5 to 25 threads the bilayer; that stretch reads IWILLIIVALFGGLVGGIFIA.

Belongs to the UPF0154 family.

It is found in the membrane. The chain is UPF0154 protein SAG1601 from Streptococcus agalactiae serotype V (strain ATCC BAA-611 / 2603 V/R).